Consider the following 429-residue polypeptide: C4-dicarboxylate transport protein (429 aa).

A run of 8 helical transmembrane segments spans residues Val3 to Leu23, Leu44 to Met64, Ile76 to Val96, Ala144 to Leu164, Val184 to Met204, Leu222 to Ala242, Thr331 to Phe351, and Ile352 to Ile372.

The protein belongs to the dicarboxylate/amino acid:cation symporter (DAACS) (TC 2.A.23) family.

The protein localises to the cell inner membrane. Functionally, responsible for the transport of dicarboxylates such as succinate, fumarate, and malate from the periplasm across the membrane. In Yersinia pseudotuberculosis serotype O:1b (strain IP 31758), this protein is C4-dicarboxylate transport protein.